Here is a 56-residue protein sequence, read N- to C-terminus: UPF0434 protein Ecaj_0131 (56 aa).

The protein belongs to the UPF0434 family.

In Ehrlichia canis (strain Jake), this protein is UPF0434 protein Ecaj_0131.